We begin with the raw amino-acid sequence, 211 residues long: Redox-sensing transcriptional repressor Rex (211 aa).

The segment at residues 13–52 (TYLRILEELEAQGVHRTSSEQLGELAQVTAFQVRKDLSYF) is a DNA-binding region (H-T-H motif). An NAD(+)-binding site is contributed by 87 to 92 (GMGRLG).

This sequence belongs to the transcriptional regulatory Rex family. As to quaternary structure, homodimer.

It is found in the cytoplasm. Functionally, modulates transcription in response to changes in cellular NADH/NAD(+) redox state. This is Redox-sensing transcriptional repressor Rex from Thermus aquaticus.